A 119-amino-acid polypeptide reads, in one-letter code: MSTSSRALAAYRNALRATKVAFGEDVRMLVAARKAMRHGMLAPDASLPVEDQITHMNDIATFLRRNLVQGKKVSGKDDVYQLRIHEETELGDNATIKETKTTLASQGGGCCGGGKDLYK.

Residues 1 to 15 constitute a mitochondrion transit peptide; that stretch reads MSTSSRALAAYRNAL.

Belongs to the complex I LYR family. MZM1 subfamily. As to quaternary structure, interacts with RIP1.

Its subcellular location is the mitochondrion matrix. Its function is as follows. Assembly factor required for Rieske Fe-S protein RIP1 incorporation into the cytochrome b-c1 (CIII) complex. Functions as a chaperone, binding to this subunit within the mitochondrial matrix and stabilizing it prior to its translocation and insertion into the late CIII dimeric intermediate within the mitochondrial inner membrane. Modulates the mitochondrial matrix zinc pool. In Eremothecium gossypii (strain ATCC 10895 / CBS 109.51 / FGSC 9923 / NRRL Y-1056) (Yeast), this protein is Mitochondrial zinc maintenance protein 1, mitochondrial (MZM1).